Consider the following 141-residue polypeptide: Molybdopterin synthase catalytic subunit 2 (141 aa).

Substrate-binding positions include 37-39, 103-104, Lys-119, and 126-128; these read MIR, HR, and KHQ.

Belongs to the MoaE family. As to quaternary structure, heterotetramer of 2 MoaD subunits and 2 MoaE subunits. Also stable as homodimer. The enzyme changes between these two forms during catalysis.

It catalyses the reaction 2 [molybdopterin-synthase sulfur-carrier protein]-C-terminal-Gly-aminoethanethioate + cyclic pyranopterin phosphate + H2O = molybdopterin + 2 [molybdopterin-synthase sulfur-carrier protein]-C-terminal Gly-Gly + 2 H(+). Its pathway is cofactor biosynthesis; molybdopterin biosynthesis. Converts molybdopterin precursor Z into molybdopterin. This requires the incorporation of two sulfur atoms into precursor Z to generate a dithiolene group. The sulfur is provided by MoaD. This is Molybdopterin synthase catalytic subunit 2 (moaE2) from Mycobacterium tuberculosis (strain CDC 1551 / Oshkosh).